Here is a 205-residue protein sequence, read N- to C-terminus: MKLILLGPPGAGKGTQAKRLEEAHGLVQLSTGDMLRAAVAQGSEVGKVAEGIMARGELVPDDVVVGIIADRIEQPDAVNGYILDGFPRNVAQAEALDKMLAGKGTTLDAVVELGVDDSILLKRIETRAAETAGGPRADDNAEALAKRLKVYHEQTAPLIAYYKAKGKLRTVDGMKSMDEVTGQIETVLGISKRKGSWLSRLTGKK.

10 to 15 serves as a coordination point for ATP; sequence GAGKGT. The segment at 30–59 is NMP; it reads STGDMLRAAVAQGSEVGKVAEGIMARGELV. AMP is bound by residues Thr-31, Arg-36, 57 to 59, 85 to 88, and Gln-92; these read ELV and GFPR. Residues 126-139 are LID; it reads TRAAETAGGPRADD. ATP is bound at residue Arg-127. Residues Arg-136 and Arg-147 each contribute to the AMP site. Lys-175 is a binding site for ATP.

The protein belongs to the adenylate kinase family. In terms of assembly, monomer.

The protein resides in the cytoplasm. It carries out the reaction AMP + ATP = 2 ADP. It participates in purine metabolism; AMP biosynthesis via salvage pathway; AMP from ADP: step 1/1. Functionally, catalyzes the reversible transfer of the terminal phosphate group between ATP and AMP. Plays an important role in cellular energy homeostasis and in adenine nucleotide metabolism. The protein is Adenylate kinase of Parvibaculum lavamentivorans (strain DS-1 / DSM 13023 / NCIMB 13966).